A 174-amino-acid polypeptide reads, in one-letter code: RNA pyrophosphohydrolase (174 aa).

Positions G6–K149 constitute a Nudix hydrolase domain. The Nudix box signature appears at G38–G59.

This sequence belongs to the Nudix hydrolase family. RppH subfamily. A divalent metal cation serves as cofactor.

Its function is as follows. Accelerates the degradation of transcripts by removing pyrophosphate from the 5'-end of triphosphorylated RNA, leading to a more labile monophosphorylated state that can stimulate subsequent ribonuclease cleavage. This is RNA pyrophosphohydrolase from Neisseria meningitidis serogroup C / serotype 2a (strain ATCC 700532 / DSM 15464 / FAM18).